Reading from the N-terminus, the 300-residue chain is Ribosomal protein bS6--L-glutamate ligase (300 aa).

The region spanning 104–287 is the ATP-grasp domain; the sequence is MQLLARQGID…IAGKMIRWIE (184 aa). ATP is bound by residues lysine 141, 178–179, aspartate 187, and 211–213; these read EY and RSN. Residues aspartate 248, glutamate 260, and asparagine 262 each coordinate Mg(2+). Mn(2+) is bound by residues aspartate 248, glutamate 260, and asparagine 262.

It belongs to the RimK family. Mg(2+) is required as a cofactor. The cofactor is Mn(2+).

Functionally, an L-glutamate ligase that catalyzes the ATP-dependent post-translational addition of glutamate residues to the C-terminus of ribosomal protein bS6 (RpsF). Is also able to catalyze the synthesis of poly-alpha-glutamate in vitro, via ATP hydrolysis from unprotected glutamate as substrate. The number of glutamate residues added to either RpsF or to poly-alpha-glutamate changes with pH. In Shigella flexneri serotype 5b (strain 8401), this protein is Ribosomal protein bS6--L-glutamate ligase.